The following is a 357-amino-acid chain: MLLVTLFLFFLQALVNGDSCGSNCEKSERPKRVFNIYWNVPTFMCHQYGLYFDEVTNFNIKHNSKDNFQGDKIAIFYDPGEFPALLPLNYGKYKIRNGGVPQEGNITIHLQRFIEYLDKTYPNRNFSGIGVIDFERWRPIFRQNWGNMKIYKNFSIDLVRKEHPFWNKKMIELEASKRFEKYARLFMEETLKLAKKTRKQADWGYYGYPYCFNMSPTNFVPDCDVTARDENNEMSWLFNNQNVLLPSVYIRRELTPDQRIGLVQGRVKEAVRISNKLKHSPKVFSYWWYVYQDETNTFLTETDVKKTFQEIVINGGDGIIIWGSSSDVNSLSKCTRLREYLLTVLGPIAVNVTEAVN.

The N-terminal stretch at 1 to 26 is a signal peptide; that stretch reads MLLVTLFLFFLQALVNGDSCGSNCEK. Disulfide bonds link C45–C334 and C211–C223. 2 N-linked (GlcNAc...) asparagine glycosylation sites follow: N105 and N125. E135 functions as the Proton donor in the catalytic mechanism. Residue N153 is glycosylated (N-linked (GlcNAc...) asparagine). N351 carries an N-linked (GlcNAc...) asparagine glycan.

It belongs to the glycosyl hydrolase 56 family.

It is found in the secreted. It catalyses the reaction Random hydrolysis of (1-&gt;4)-linkages between N-acetyl-beta-D-glucosamine and D-glucuronate residues in hyaluronate.. Hydrolyzes high molecular weight hyaluronic acid to produce small oligosaccharides. In Vespa magnifica (Hornet), this protein is Hyaluronidase.